The chain runs to 267 residues: tRNA-cytidine(32) 2-sulfurtransferase (267 aa).

The PP-loop motif signature appears at 37-42 (SGGKDS). Residues C112, C115, and C203 each coordinate [4Fe-4S] cluster.

This sequence belongs to the TtcA family. As to quaternary structure, homodimer. It depends on Mg(2+) as a cofactor. Requires [4Fe-4S] cluster as cofactor.

The protein resides in the cytoplasm. The catalysed reaction is cytidine(32) in tRNA + S-sulfanyl-L-cysteinyl-[cysteine desulfurase] + AH2 + ATP = 2-thiocytidine(32) in tRNA + L-cysteinyl-[cysteine desulfurase] + A + AMP + diphosphate + H(+). It functions in the pathway tRNA modification. Its function is as follows. Catalyzes the ATP-dependent 2-thiolation of cytidine in position 32 of tRNA, to form 2-thiocytidine (s(2)C32). The sulfur atoms are provided by the cysteine/cysteine desulfurase (IscS) system. The chain is tRNA-cytidine(32) 2-sulfurtransferase from Dichelobacter nodosus (strain VCS1703A).